We begin with the raw amino-acid sequence, 76 residues long: Kappa-actitoxin-Avd4n (76 aa).

The signal sequence occupies residues 1–19 (MNKAFFLCLVVLCAAVVFA). Positions 20 to 31 (AEDLQKGKHAPF) are excised as a propeptide. Intrachain disulfides connect Cys-37–Cys-72 and Cys-39–Cys-65.

The protein belongs to the sea anemone type 3 (BDS) potassium channel toxin family. In terms of processing, lacks the conventional Cys residue at position 55. Thus, only 2 disulfide are possible present. Experimental results show no expression in the ectodermal tissue from the distal and proximal tentacles, body wall, and oral disk. Since paralogs are expressed in this tissue, an expression of this toxin in this tissue is probable. The negative results could be explained by the very low abundance of EST sequences.

Its subcellular location is the secreted. It localises to the nematocyst. Functionally, blocks Kv3 voltage-gated potassium channels. Reduces blood pressure. The sequence is that of Kappa-actitoxin-Avd4n from Anemonia viridis (Snakelocks anemone).